The chain runs to 145 residues: Maximins 3/H3 type 2 (145 aa).

Positions methionine 1 to alanine 18 are cleaved as a signal peptide. 2 propeptides span residues arginine 19–isoleucine 43 and arginine 74–arginine 124. At isoleucine 144 the chain carries Isoleucine amide.

The protein belongs to the bombinin family. As to expression, expressed by the skin glands.

It is found in the secreted. In terms of biological role, maximin-3 shows antibacterial activity against both Gram-positive and Gram-negative bacteria. It also shows antimicrobial activity against the fungus C.albicans, but not against A.flavus nor P.uticale. It has little hemolytic activity. It possess a significant cytotoxicity against tumor cell lines. It possess a significant anti-HIV activity. It shows high spermicidal activity. Functionally, maximin-H3 shows antibacterial activity against both Gram-positive and Gram-negative bacteria. It also shows antimicrobial activity against the fungus C.albicans. Shows strong hemolytic activity. The protein is Maximins 3/H3 type 2 of Bombina maxima (Giant fire-bellied toad).